A 193-amino-acid polypeptide reads, in one-letter code: Thymidine kinase (193 aa).

ATP-binding positions include G14 to T21 and D87 to H90. The active-site Proton acceptor is E88. C147, C150, C185, and C188 together coordinate Zn(2+).

This sequence belongs to the thymidine kinase family. As to quaternary structure, homotetramer.

Its subcellular location is the cytoplasm. It catalyses the reaction thymidine + ATP = dTMP + ADP + H(+). This chain is Thymidine kinase, found in Roseiflexus sp. (strain RS-1).